Reading from the N-terminus, the 270-residue chain is Proteasome subunit beta (270 aa).

Positions 1-47 are cleaved as a propeptide — removed in mature form; by autocatalysis; sequence MSNRGRLGDAFLRPGSSSFLDFLSDHAPELLPGRSAAAGNAPLAPHA. Catalysis depends on threonine 48, which acts as the Nucleophile.

Belongs to the peptidase T1B family. As to quaternary structure, the 20S proteasome core is composed of 14 alpha and 14 beta subunits that assemble into four stacked heptameric rings, resulting in a barrel-shaped structure. The two inner rings, each composed of seven catalytic beta subunits, are sandwiched by two outer rings, each composed of seven alpha subunits. The catalytic chamber with the active sites is on the inside of the barrel. Has a gated structure, the ends of the cylinder being occluded by the N-termini of the alpha-subunits. Is capped by the proteasome-associated ATPase, ARC.

It is found in the cytoplasm. The catalysed reaction is Cleavage of peptide bonds with very broad specificity.. It participates in protein degradation; proteasomal Pup-dependent pathway. With respect to regulation, the formation of the proteasomal ATPase ARC-20S proteasome complex, likely via the docking of the C-termini of ARC into the intersubunit pockets in the alpha-rings, may trigger opening of the gate for substrate entry. Interconversion between the open-gate and close-gate conformations leads to a dynamic regulation of the 20S proteasome proteolysis activity. Functionally, component of the proteasome core, a large protease complex with broad specificity involved in protein degradation. The chain is Proteasome subunit beta from Xylanimonas cellulosilytica (strain DSM 15894 / JCM 12276 / CECT 5975 / KCTC 9989 / LMG 20990 / NBRC 107835 / XIL07).